The chain runs to 330 residues: Mas-related G-protein coupled receptor member X2 (330 aa).

Residues 1-33 (MDPTTPAWGTESTTMNGNDQALPLLCGKETLIL) lie on the Extracellular side of the membrane. Residues 34-54 (VLLILFIALVGLVGNAFVLWL) form a helical membrane-spanning segment. Over 55 to 63 (LGFRMRRNA) the chain is Cytoplasmic. Residues 64 to 84 (FSVYVLSLAGADFLFLCFPMI) traverse the membrane as a helical segment. Residues 85–96 (NCLEYLINFFHS) are Extracellular-facing. A helical membrane pass occupies residues 97-117 (ISINFPSFFTTVMTCAYLAGL). Residues 118 to 144 (SMLSAISTERCLSVLWPIWYRCRRPRH) lie on the Cytoplasmic side of the membrane. A helical transmembrane segment spans residues 145-165 (LSAVLCVLLWALSLLLSILEG). The Extracellular segment spans residues 166 to 184 (KFCGLLFSDGDSGWCQTFD). A helical transmembrane segment spans residues 185-205 (FITAAWLMFLFVVLCGSSLAL). Over 206 to 228 (LVRILCGSQGLPLTRLYLTILLT) the chain is Cytoplasmic. A helical membrane pass occupies residues 229–249 (VLIFLLCGLPFGIQWFLILWI). Residues 250–264 (WKNSDVLFCHIHPVS) lie on the Extracellular side of the membrane. The helical transmembrane segment at 265–285 (VVLSSFNSSANPIIYFFVGSF) threads the bilayer. At 286–330 (RKQWRLRQPVLKLALQRALQDTAEVDHSEGCFSQGTLEMSGSSLV) the chain is on the cytoplasmic side.

Belongs to the G-protein coupled receptor 1 family. Mas subfamily.

It localises to the cell membrane. Functionally, mast cell-specific receptor for basic secretagogues, i.e. cationic amphiphilic drugs, as well as endo- or exogenous peptides, consisting of a basic head group and a hydrophobic core. Recognizes and binds small molecules containing a cyclized tetrahydroisoquinoline (THIQ), such as non-steroidal neuromuscular blocking drugs (NMBDs), including tubocurarine and atracurium. In response to these compounds, mediates pseudo-allergic reactions characterized by histamine release, inflammation and airway contraction. The chain is Mas-related G-protein coupled receptor member X2 (MRGPRX2) from Rhinopithecus bieti (Black snub-nosed monkey).